We begin with the raw amino-acid sequence, 532 residues long: Mitogen-activated protein kinase kinase mkk1 (532 aa).

Residues 235–505 enclose the Protein kinase domain; that stretch reads IVELGGLGEG…PWKMLEHPWM (271 aa). ATP contacts are provided by residues 241–249 and Lys-264; that span reads LGEGAGGAV. Catalysis depends on Asp-362, which acts as the Proton acceptor.

This sequence belongs to the protein kinase superfamily. STE Ser/Thr protein kinase family. MAP kinase kinase subfamily.

The catalysed reaction is L-seryl-[protein] + ATP = O-phospho-L-seryl-[protein] + ADP + H(+). It catalyses the reaction L-threonyl-[protein] + ATP = O-phospho-L-threonyl-[protein] + ADP + H(+). Mitogen-activated protein kinase kinase, part of the mkh1-mkk1-spm1 MAPK cascade that regulates regulates vegetative growth, conidial formation, colony surface hydrophobicity, osmotic stress, cell wall integrity maintenance, carbon and nitrogen source utilization, chitin distribution, septa formation, and pathogenicity. The polypeptide is Mitogen-activated protein kinase kinase mkk1 (Cytospora mali (Apple Valsa canker fungus)).